The primary structure comprises 322 residues: UDP-N-acetylenolpyruvoylglucosamine reductase (322 aa).

One can recognise an FAD-binding PCMH-type domain in the interval Arg36–Gly202. Arg182 is an active-site residue. The Proton donor role is filled by Ser231. Glu301 is an active-site residue.

It belongs to the MurB family. FAD is required as a cofactor.

Its subcellular location is the cytoplasm. The enzyme catalyses UDP-N-acetyl-alpha-D-muramate + NADP(+) = UDP-N-acetyl-3-O-(1-carboxyvinyl)-alpha-D-glucosamine + NADPH + H(+). The protein operates within cell wall biogenesis; peptidoglycan biosynthesis. Cell wall formation. The chain is UDP-N-acetylenolpyruvoylglucosamine reductase from Brucella abortus (strain S19).